The sequence spans 103 residues: Integration host factor subunit beta (103 aa).

The segment at 59–82 (RLGRNPKTGESVALPGKHVPHFKP) is disordered.

This sequence belongs to the bacterial histone-like protein family. Heterodimer of an alpha and a beta chain.

Functionally, this protein is one of the two subunits of integration host factor, a specific DNA-binding protein that functions in genetic recombination as well as in transcriptional and translational control. The sequence is that of Integration host factor subunit beta from Xanthomonas oryzae pv. oryzae (strain MAFF 311018).